A 67-amino-acid chain; its full sequence is UPF0434 protein Bphy_0537 (67 aa).

It belongs to the UPF0434 family.

The polypeptide is UPF0434 protein Bphy_0537 (Paraburkholderia phymatum (strain DSM 17167 / CIP 108236 / LMG 21445 / STM815) (Burkholderia phymatum)).